We begin with the raw amino-acid sequence, 126 residues long: RuBisCO chaperone RbcX (126 aa).

The protein belongs to the RbcX family. As to quaternary structure, homodimer. Interacts with the exposed C-terminal peptide of RbcL via its central cleft, contacts a second RbcL monomer via its peripheral polar surface.

It is found in the carboxysome. It localises to the cytoplasm. Functionally, an RbcL-specific chaperone. Required for assembly of the RbcL8 core. The central cleft of the RbcX homodimer (RbcX2) binds the C-terminus of a RbcL monomer, stabilizing the C-terminus and probably preventing its reassociation with chaperonin GroEL-ES. At the same time the peripheral region of RbcX2 binds a second RbcL monomer, bridging the RbcL homodimers in the correct orientation. The RbcX2(2)-bound RbcL dimers then assemble into the RbcL8 core (RbcL8-(RbcX2)8). RbcS binding triggers the release of RbcX2. This is RuBisCO chaperone RbcX from Thermosynechococcus vestitus (strain NIES-2133 / IAM M-273 / BP-1).